A 118-amino-acid polypeptide reads, in one-letter code: Lutropin subunit beta (118 aa).

Intrachain disulfides connect C9/C57, C23/C72, C26/C110, C34/C88, C38/C90, and C93/C100. N13 carries an N-linked (GlcNAc...) asparagine glycan.

This sequence belongs to the glycoprotein hormones subunit beta family. Heterodimer of a common alpha chain and a unique beta chain which confers biological specificity to thyrotropin, lutropin, follitropin and gonadotropin.

It is found in the secreted. In terms of biological role, promotes spermatogenesis and ovulation by stimulating the testes and ovaries to synthesize steroids. This chain is Lutropin subunit beta (LHB), found in Balaenoptera acutorostrata (Common minke whale).